A 316-amino-acid polypeptide reads, in one-letter code: L-lactate dehydrogenase (316 aa).

NAD(+)-binding positions include V15, D36, R41, Y66, and 80-81 (GA). Substrate-binding positions include Q83, R90, and 122–125 (NPVD). NAD(+) contacts are provided by residues 120–122 (ATN) and T145. 150–153 (DTAR) provides a ligand contact to substrate. Beta-D-fructose 1,6-bisphosphate contacts are provided by R155 and H170. H177 serves as the catalytic Proton acceptor. The residue at position 222 (Y222) is a Phosphotyrosine. T231 is a binding site for substrate. A disordered region spans residues 287 to 316 (DPGLSDEEREALRDSARALRDSRADLTVGT). The segment covering 296-310 (EALRDSARALRDSRA) has biased composition (basic and acidic residues).

Belongs to the LDH/MDH superfamily. LDH family. Homotetramer.

It localises to the cytoplasm. The enzyme catalyses (S)-lactate + NAD(+) = pyruvate + NADH + H(+). It functions in the pathway fermentation; pyruvate fermentation to lactate; (S)-lactate from pyruvate: step 1/1. Its activity is regulated as follows. Allosterically activated by fructose 1,6-bisphosphate (FBP). Its function is as follows. Catalyzes the conversion of lactate to pyruvate. The polypeptide is L-lactate dehydrogenase (Salinibacter ruber (strain DSM 13855 / M31)).